The chain runs to 64 residues: MRILYLLFSLLFLALQVSPGLSSPKRDMLFCKRGTCHFGRCPSHLIKVGSCFGFRSCCKWPWDA.

A signal peptide spans Met-1 to Met-28. 3 disulfides stabilise this stretch: Cys-31–Cys-57, Cys-36–Cys-51, and Cys-41–Cys-58.

In terms of tissue distribution, expressed in circulating heterophil granulocytes and bone marrow (at protein level).

Its subcellular location is the secreted. In terms of biological role, antibacterial activity against the Gram-positive bacterium Staphylococcus aureus. Lacks antibacterial activity against the Gram-negative bacterium E.coli K-12. The polypeptide is Antimicrobial peptide THP2 (Meleagris gallopavo (Wild turkey)).